The following is a 38-amino-acid chain: Photosystem II reaction center protein L (38 aa).

Residues 17–37 traverse the membrane as a helical segment; the sequence is SLYWGLLCIFVLAILFSSYFF.

It belongs to the PsbL family. In terms of assembly, PSII is composed of 1 copy each of membrane proteins PsbA, PsbB, PsbC, PsbD, PsbE, PsbF, PsbH, PsbI, PsbJ, PsbK, PsbL, PsbM, PsbT, PsbX, PsbY, PsbZ, Psb30/Ycf12, at least 3 peripheral proteins of the oxygen-evolving complex and a large number of cofactors. It forms dimeric complexes.

Its subcellular location is the plastid. It localises to the chloroplast thylakoid membrane. In terms of biological role, one of the components of the core complex of photosystem II (PSII). PSII is a light-driven water:plastoquinone oxidoreductase that uses light energy to abstract electrons from H(2)O, generating O(2) and a proton gradient subsequently used for ATP formation. It consists of a core antenna complex that captures photons, and an electron transfer chain that converts photonic excitation into a charge separation. This subunit is found at the monomer-monomer interface and is required for correct PSII assembly and/or dimerization. The protein is Photosystem II reaction center protein L of Cyanidioschyzon merolae (strain NIES-3377 / 10D) (Unicellular red alga).